Reading from the N-terminus, the 391-residue chain is NADH-quinone oxidoreductase subunit D (391 aa).

It belongs to the complex I 49 kDa subunit family. In terms of assembly, NDH-1 is composed of 14 different subunits. Subunits NuoB, C, D, E, F, and G constitute the peripheral sector of the complex.

It localises to the cell inner membrane. The catalysed reaction is a quinone + NADH + 5 H(+)(in) = a quinol + NAD(+) + 4 H(+)(out). NDH-1 shuttles electrons from NADH, via FMN and iron-sulfur (Fe-S) centers, to quinones in the respiratory chain. The immediate electron acceptor for the enzyme in this species is believed to be ubiquinone. Couples the redox reaction to proton translocation (for every two electrons transferred, four hydrogen ions are translocated across the cytoplasmic membrane), and thus conserves the redox energy in a proton gradient. This is NADH-quinone oxidoreductase subunit D from Rickettsia bellii (strain OSU 85-389).